The chain runs to 585 residues: L-gulonolactone oxidase 3 (585 aa).

Positions M1 to S24 are cleaved as a signal peptide. The region spanning K51 to A233 is the FAD-binding PCMH-type domain.

Belongs to the oxygen-dependent FAD-linked oxidoreductase family. Requires FAD as cofactor.

Its subcellular location is the vacuole. The enzyme catalyses L-gulono-1,4-lactone + O2 = L-ascorbate + H2O2 + H(+). The protein operates within cofactor biosynthesis; L-ascorbate biosynthesis. Its function is as follows. Catalyzes the oxidation of L-gulono-1,4-lactone to ascorbic acid. L-gulono-1,4-lactone is oxidized to hydrogen peroxide and L-xylo-hexulonolactone which spontaneously isomerizes to L-ascorbate. This is L-gulonolactone oxidase 3 from Arabidopsis thaliana (Mouse-ear cress).